The chain runs to 168 residues: UPF0262 protein BBta_0898 (168 aa).

This sequence belongs to the UPF0262 family.

The sequence is that of UPF0262 protein BBta_0898 from Bradyrhizobium sp. (strain BTAi1 / ATCC BAA-1182).